A 675-amino-acid polypeptide reads, in one-letter code: Gastrula zinc finger protein xFG20-1 (675 aa).

10 consecutive C2H2-type zinc fingers follow at residues 62-84 (FTCTECGKTFTRKPNYESHIRAH), 90-112 (FSCMVCDKAFAWKSNLLVHYSVH), 118-140 (FSCTECDKTFSNKAQLEKHLRVH), 146-168 (YSCEQCGKSFAHKCVLDSHQRTH), 174-196 (FSCTECGKKFSQRGNLHKHLKTH), 202-224 (HLCAECGKTFSFKSTLLEHQKIH), 257-279 (FPCTECGEIFSNEHELLTHQSTH), 286-308 (FPCTKCWGIFSNEHELRTHQSTH), 344-366 (LPCTECGGTFTNEQELLAHQSTH), and 373-395 (LPCTECGEIFSDEHELLTHQSTH). A disordered region spans residues 302–325 (RTHQSTHTEGQKSLPSTESGGTFS). A compositionally biased stretch (polar residues) spans 304-325 (HQSTHTEGQKSLPSTESGGTFS). The segment covering 390-407 (THQSTHTSPSTEFGVQTT) has biased composition (polar residues). Positions 390–423 (THQSTHTSPSTEFGVQTTEDNHQSPSKDHTGEKP) are disordered. A compositionally biased stretch (basic and acidic residues) spans 408-421 (EDNHQSPSKDHTGE). C2H2-type zinc fingers lie at residues 424–446 (FSCSECGKSFFYKSVLKDHLVVH), 452–474 (YHCIECGRSYTHQSSLKSHQRTH), 480–501 (FSCNLCDKLSIISKLRLHYRVH), 507–529 (YPCTECDKTFTKKEQLESHYKVH), 535–557 (YPCQQCGKSFSHKSVLKLHLRTH), 563–585 (FSCTECGKTFTRKPNYESHLTTH), 591–613 (FSCTECGKEFAWKRNLEAHYKMH), and 619–642 (FTCTECGKTFTWKSNLRSHYTTVH).

It belongs to the krueppel C2H2-type zinc-finger protein family.

The protein resides in the nucleus. Its function is as follows. May be involved in transcriptional regulation. In Xenopus laevis (African clawed frog), this protein is Gastrula zinc finger protein xFG20-1.